A 242-amino-acid polypeptide reads, in one-letter code: ATP synthase subunit a (242 aa).

6 consecutive transmembrane segments (helical) span residues 29–49, 84–104, 114–134, 140–160, 181–201, and 203–223; these read SSIY…LAFY, FIPL…LGMT, IIVT…VGFV, FLTL…MIVI, MAGH…MIYL, and FLPI…AILQ.

This sequence belongs to the ATPase A chain family. As to quaternary structure, F-type ATPases have 2 components, CF(1) - the catalytic core - and CF(0) - the membrane proton channel. CF(1) has five subunits: alpha(3), beta(3), gamma(1), delta(1), epsilon(1). CF(0) has three main subunits: a(1), b(2) and c(9-12). The alpha and beta chains form an alternating ring which encloses part of the gamma chain. CF(1) is attached to CF(0) by a central stalk formed by the gamma and epsilon chains, while a peripheral stalk is formed by the delta and b chains.

It localises to the cell membrane. Key component of the proton channel; it plays a direct role in the translocation of protons across the membrane. The protein is ATP synthase subunit a of Rickettsia africae (strain ESF-5).